A 232-amino-acid polypeptide reads, in one-letter code: Ion-translocating oxidoreductase complex subunit E (232 aa).

Helical transmembrane passes span Gly18–Ala38, Leu39–Val59, Ile69–Ala89, Gly93–Gly113, Ala127–Ala147, and Pro182–Leu202.

It belongs to the NqrDE/RnfAE family. In terms of assembly, the complex is composed of six subunits: RnfA, RnfB, RnfC, RnfD, RnfE and RnfG.

The protein localises to the cell inner membrane. Functionally, part of a membrane-bound complex that couples electron transfer with translocation of ions across the membrane. This chain is Ion-translocating oxidoreductase complex subunit E, found in Shewanella sp. (strain W3-18-1).